Consider the following 230-residue polypeptide: CRP-like protein Clp (230 aa).

18 to 139 (PSLALDAGTI…APKILYAIGV (122 aa)) provides a ligand contact to a nucleoside 3',5'-cyclic phosphate. The 73-residue stretch at 158–230 (LDVTDRIVRT…GKTVVLYGTR (73 aa)) folds into the HTH crp-type domain. The segment at residues 190 to 209 (RQELARLVGCSREMAGRVLK) is a DNA-binding region (H-T-H motif).

Homodimer.

Its subcellular location is the cytoplasm. Allosterically inhibited by cyclic di-GMP (c-di-GMP), which binds to Clp and abolishes its ability to bind its target gene promoter. Functionally, global transcriptional regulator that regulates virulence factors production by activating or repressing the expression of a large set of genes in diffusible signal factor (DSF) pathway. The protein is CRP-like protein Clp (clp) of Xanthomonas oryzae pv. oryzae (strain MAFF 311018).